A 355-amino-acid polypeptide reads, in one-letter code: Erythronate-4-phosphate dehydrogenase (355 aa).

2 residues coordinate substrate: Ser-45 and Thr-66. Asp-146 contacts NAD(+). Arg-206 is an active-site residue. Asp-229 is an NAD(+) binding site. Glu-234 is an active-site residue. Catalysis depends on His-251, which acts as the Proton donor. Gly-254 is an NAD(+) binding site. Tyr-255 serves as a coordination point for substrate.

This sequence belongs to the D-isomer specific 2-hydroxyacid dehydrogenase family. PdxB subfamily. In terms of assembly, homodimer.

The protein resides in the cytoplasm. It catalyses the reaction 4-phospho-D-erythronate + NAD(+) = (R)-3-hydroxy-2-oxo-4-phosphooxybutanoate + NADH + H(+). The protein operates within cofactor biosynthesis; pyridoxine 5'-phosphate biosynthesis; pyridoxine 5'-phosphate from D-erythrose 4-phosphate: step 2/5. Functionally, catalyzes the oxidation of erythronate-4-phosphate to 3-hydroxy-2-oxo-4-phosphonooxybutanoate. The chain is Erythronate-4-phosphate dehydrogenase from Acinetobacter baumannii (strain AB307-0294).